We begin with the raw amino-acid sequence, 154 residues long: Ribosome maturation factor RimP (154 aa).

The protein belongs to the RimP family.

Its subcellular location is the cytoplasm. Required for maturation of 30S ribosomal subunits. The chain is Ribosome maturation factor RimP from Clostridium kluyveri (strain ATCC 8527 / DSM 555 / NBRC 12016 / NCIMB 10680 / K1).